Consider the following 54-residue polypeptide: UPF0391 membrane protein PFL_0093 (54 aa).

Transmembrane regions (helical) follow at residues tryptophan 4 to alanine 24 and glycine 29 to glycine 49.

The protein belongs to the UPF0391 family.

The protein resides in the cell membrane. The chain is UPF0391 membrane protein PFL_0093 from Pseudomonas fluorescens (strain ATCC BAA-477 / NRRL B-23932 / Pf-5).